We begin with the raw amino-acid sequence, 418 residues long: Serine--tRNA ligase (418 aa).

231 to 233 (TAE) contacts L-serine. 262-264 (RSE) is an ATP binding site. Glu-285 is an L-serine binding site. ATP is bound at residue 349 to 352 (EISS). Ser-385 contributes to the L-serine binding site.

The protein belongs to the class-II aminoacyl-tRNA synthetase family. Type-1 seryl-tRNA synthetase subfamily. Homodimer. The tRNA molecule binds across the dimer.

It is found in the cytoplasm. The enzyme catalyses tRNA(Ser) + L-serine + ATP = L-seryl-tRNA(Ser) + AMP + diphosphate + H(+). It carries out the reaction tRNA(Sec) + L-serine + ATP = L-seryl-tRNA(Sec) + AMP + diphosphate + H(+). It participates in aminoacyl-tRNA biosynthesis; selenocysteinyl-tRNA(Sec) biosynthesis; L-seryl-tRNA(Sec) from L-serine and tRNA(Sec): step 1/1. Functionally, catalyzes the attachment of serine to tRNA(Ser). Is also able to aminoacylate tRNA(Sec) with serine, to form the misacylated tRNA L-seryl-tRNA(Sec), which will be further converted into selenocysteinyl-tRNA(Sec). The chain is Serine--tRNA ligase from Ureaplasma parvum serovar 3 (strain ATCC 27815 / 27 / NCTC 11736).